The chain runs to 168 residues: Plastocyanin B, chloroplastic (168 aa).

The N-terminal 69 residues, 1–69 (MAAVTSAAVS…SAMIASNAMA (69 aa)), are a transit peptide targeting the chloroplast. The Plastocyanin-like domain maps to 70–168 (VDVLLGADDG…AGMVGKVIVN (99 aa)). Cu cation is bound by residues histidine 106, cysteine 153, histidine 156, and methionine 161.

The protein belongs to the plastocyanin family. Cu(2+) serves as cofactor.

It is found in the plastid. The protein resides in the chloroplast thylakoid membrane. In terms of biological role, participates in electron transfer between P700 and the cytochrome b6-f complex in photosystem I. This is Plastocyanin B, chloroplastic (PETE) from Populus nigra (Lombardy poplar).